The primary structure comprises 400 residues: tRNA-specific 2-thiouridylase MnmA (400 aa).

Residues 19–26 and Leu45 each bind ATP; that span reads AMSGGVDS. The Nucleophile role is filled by Cys113. Cys113 and Cys210 are oxidised to a cystine. Gly137 provides a ligand contact to ATP. The tract at residues 160-162 is interaction with tRNA; sequence RDQ. The Cysteine persulfide intermediate role is filled by Cys210.

Belongs to the MnmA/TRMU family.

The protein resides in the cytoplasm. It carries out the reaction S-sulfanyl-L-cysteinyl-[protein] + uridine(34) in tRNA + AH2 + ATP = 2-thiouridine(34) in tRNA + L-cysteinyl-[protein] + A + AMP + diphosphate + H(+). In terms of biological role, catalyzes the 2-thiolation of uridine at the wobble position (U34) of tRNA, leading to the formation of s(2)U34. This chain is tRNA-specific 2-thiouridylase MnmA, found in Nitrobacter hamburgensis (strain DSM 10229 / NCIMB 13809 / X14).